A 125-amino-acid chain; its full sequence is Small ribosomal subunit protein eS8 (125 aa).

Positions 1-34 are disordered; that stretch reads MQWQGRSVRKSTGGRYSPSRGKRRREIGSAPAET.

It belongs to the eukaryotic ribosomal protein eS8 family. As to quaternary structure, part of the 30S ribosomal subunit.

The polypeptide is Small ribosomal subunit protein eS8 (Methanospirillum hungatei JF-1 (strain ATCC 27890 / DSM 864 / NBRC 100397 / JF-1)).